The following is a 381-amino-acid chain: Succinyl-diaminopimelate desuccinylase (381 aa).

H69 contacts Zn(2+). D71 is an active-site residue. D103 is a binding site for Zn(2+). E137 acts as the Proton acceptor in catalysis. Positions 138, 166, and 355 each coordinate Zn(2+).

This sequence belongs to the peptidase M20A family. DapE subfamily. As to quaternary structure, homodimer. It depends on Zn(2+) as a cofactor. Co(2+) is required as a cofactor.

The catalysed reaction is N-succinyl-(2S,6S)-2,6-diaminopimelate + H2O = (2S,6S)-2,6-diaminopimelate + succinate. Its pathway is amino-acid biosynthesis; L-lysine biosynthesis via DAP pathway; LL-2,6-diaminopimelate from (S)-tetrahydrodipicolinate (succinylase route): step 3/3. Functionally, catalyzes the hydrolysis of N-succinyl-L,L-diaminopimelic acid (SDAP), forming succinate and LL-2,6-diaminopimelate (DAP), an intermediate involved in the bacterial biosynthesis of lysine and meso-diaminopimelic acid, an essential component of bacterial cell walls. This Rickettsia rickettsii (strain Iowa) protein is Succinyl-diaminopimelate desuccinylase.